Consider the following 165-residue polypeptide: Endoribonuclease YbeY (165 aa).

Zn(2+)-binding residues include His130, His134, and His140.

The protein belongs to the endoribonuclease YbeY family. Zn(2+) serves as cofactor.

It is found in the cytoplasm. Its function is as follows. Single strand-specific metallo-endoribonuclease involved in late-stage 70S ribosome quality control and in maturation of the 3' terminus of the 16S rRNA. The polypeptide is Endoribonuclease YbeY (Streptococcus agalactiae serotype Ia (strain ATCC 27591 / A909 / CDC SS700)).